Reading from the N-terminus, the 546-residue chain is (-)-5-epieremophilene synthase STPS2 (546 aa).

Residues Asp299, Asp303, Asp442, Thr446, and Glu450 each contribute to the Mg(2+) site. The DDXXD motif motif lies at 299-303 (DDTYD).

This sequence belongs to the terpene synthase family. Tpsa subfamily. As to quaternary structure, monomer. Mg(2+) serves as cofactor. Highly expressed in leaves. Expressed at levels in flowers.

It catalyses the reaction (2E,6E)-farnesyl diphosphate = (-)-5-epi-eremophilene + diphosphate. It participates in secondary metabolite biosynthesis; terpenoid biosynthesis. In terms of biological role, sesquiterpene synthase that catalyzes the conversion of farnesyl diphosphate to (-)-5-epi-eremophilene. The chain is (-)-5-epieremophilene synthase STPS2 from Salvia miltiorrhiza (Chinese sage).